The sequence spans 358 residues: Sesquiterpene synthase Agr3 (358 aa).

Asp99, Asn246, Ser250, and Glu254 together coordinate Mg(2+). A DDXXD motif motif is present at residues 99-103; that stretch reads DNISD. (2E,6E)-farnesyl diphosphate contacts are provided by Arg334 and Tyr335.

The protein belongs to the terpene synthase family. Requires Mg(2+) as cofactor.

It catalyses the reaction (2E,6E)-farnesyl diphosphate = alpha-muurolene + diphosphate. The enzyme catalyses (2E,6E)-farnesyl diphosphate = gamma-muurolene + diphosphate. The catalysed reaction is (2E,6E)-farnesyl diphosphate = delta-cadinene + diphosphate. In terms of biological role, terpene cyclase that catalyzes the cyclization of farnesyl diphosphate (FPP) to various sesquiterpenes, including alpha-muurolene, gamma-muurolene, germacrene, delta-cadinene, delta-cadinol and cubenol. This chain is Sesquiterpene synthase Agr3, found in Cyclocybe aegerita (Black poplar mushroom).